A 359-amino-acid polypeptide reads, in one-letter code: Histidinol-phosphate aminotransferase (359 aa).

N6-(pyridoxal phosphate)lysine is present on Lys-217.

This sequence belongs to the class-II pyridoxal-phosphate-dependent aminotransferase family. Histidinol-phosphate aminotransferase subfamily. In terms of assembly, homodimer. The cofactor is pyridoxal 5'-phosphate.

The catalysed reaction is L-histidinol phosphate + 2-oxoglutarate = 3-(imidazol-4-yl)-2-oxopropyl phosphate + L-glutamate. The protein operates within amino-acid biosynthesis; L-histidine biosynthesis; L-histidine from 5-phospho-alpha-D-ribose 1-diphosphate: step 7/9. The sequence is that of Histidinol-phosphate aminotransferase from Salmonella choleraesuis (strain SC-B67).